Here is a 332-residue protein sequence, read N- to C-terminus: Fructose-1,6-bisphosphatase class 1 1 (332 aa).

Residues E92, D115, L117, and D118 each coordinate Mg(2+). Residues 118–121 (DGSS), N211, Y244, 262–264 (YLY), and K274 contribute to the substrate site. E280 provides a ligand contact to Mg(2+).

The protein belongs to the FBPase class 1 family. As to quaternary structure, homotetramer. It depends on Mg(2+) as a cofactor.

It is found in the cytoplasm. It carries out the reaction beta-D-fructose 1,6-bisphosphate + H2O = beta-D-fructose 6-phosphate + phosphate. Its pathway is carbohydrate biosynthesis; gluconeogenesis. This Christiangramia forsetii (strain DSM 17595 / CGMCC 1.15422 / KT0803) (Gramella forsetii) protein is Fructose-1,6-bisphosphatase class 1 1.